Consider the following 411-residue polypeptide: Multifunctional CCA protein (411 aa).

Positions 8 and 11 each coordinate ATP. CTP contacts are provided by G8 and R11. Positions 21 and 23 each coordinate Mg(2+). 3 residues coordinate ATP: R91, R137, and R140. CTP-binding residues include R91, R137, and R140. One can recognise an HD domain in the interval 228–333 (SGVHTLLVIE…LKVFNALDIW (106 aa)).

The protein belongs to the tRNA nucleotidyltransferase/poly(A) polymerase family. Bacterial CCA-adding enzyme type 1 subfamily. As to quaternary structure, monomer. Can also form homodimers and oligomers. The cofactor is Mg(2+). It depends on Ni(2+) as a cofactor.

The enzyme catalyses a tRNA precursor + 2 CTP + ATP = a tRNA with a 3' CCA end + 3 diphosphate. It carries out the reaction a tRNA with a 3' CCA end + 2 CTP + ATP = a tRNA with a 3' CCACCA end + 3 diphosphate. Functionally, catalyzes the addition and repair of the essential 3'-terminal CCA sequence in tRNAs without using a nucleic acid template. Adds these three nucleotides in the order of C, C, and A to the tRNA nucleotide-73, using CTP and ATP as substrates and producing inorganic pyrophosphate. tRNA 3'-terminal CCA addition is required both for tRNA processing and repair. Also involved in tRNA surveillance by mediating tandem CCA addition to generate a CCACCA at the 3' terminus of unstable tRNAs. While stable tRNAs receive only 3'-terminal CCA, unstable tRNAs are marked with CCACCA and rapidly degraded. The chain is Multifunctional CCA protein from Actinobacillus pleuropneumoniae serotype 5b (strain L20).